A 377-amino-acid polypeptide reads, in one-letter code: Probable protein phosphatase 2C 7 (377 aa).

2 disordered regions span residues 1-68 (MAAH…GKAA) and 80-99 (TTVAEATATGPPKGSDEDDE). Positions 21–39 (PPAAEAEAAAAAAAIARAA) are enriched in low complexity. Basic residues predominate over residues 51-63 (GVRHPLKHRRFRA). Residues 80 to 89 (TTVAEATATG) are compositionally biased toward low complexity. The PPM-type phosphatase domain occupies 115-361 (SCGYSSFRGR…DNITCIVVKF (247 aa)). Mn(2+) contacts are provided by Asp151, Gly152, Asp313, and Asp352.

It belongs to the PP2C family. The cofactor is Mg(2+). Mn(2+) is required as a cofactor.

It carries out the reaction O-phospho-L-seryl-[protein] + H2O = L-seryl-[protein] + phosphate. It catalyses the reaction O-phospho-L-threonyl-[protein] + H2O = L-threonyl-[protein] + phosphate. The sequence is that of Probable protein phosphatase 2C 7 from Oryza sativa subsp. japonica (Rice).